The sequence spans 108 residues: Large ribosomal subunit protein bL21 (108 aa).

This sequence belongs to the bacterial ribosomal protein bL21 family. As to quaternary structure, part of the 50S ribosomal subunit. Contacts protein L20.

Functionally, this protein binds to 23S rRNA in the presence of protein L20. The chain is Large ribosomal subunit protein bL21 from Orientia tsutsugamushi (strain Ikeda) (Rickettsia tsutsugamushi).